The primary structure comprises 558 residues: N-acetylglucosamine-6-O-sulfatase (558 aa).

The residue at position 101 (serine 101) is a 3-oxoalanine (Ser).

This sequence belongs to the sulfatase family. In terms of processing, the conversion to 3-oxoalanine (also known as C-formylglycine, FGly), of a serine or cysteine residue in prokaryotes and of a cysteine residue in eukaryotes, is critical for catalytic activity.

In terms of biological role, exosulfatase involved in the degradation of the glycosaminoglycan (GAG) heparan sulfate (HS). Catalyzes the hydrolysis of the 6-sulfate groups of the N-acetyl-D-glucosamine 6-sulfate units. GAG-specific sulfatases play a key role in the persistence of the major human gut symbiont B.thetaiotaomicron in the host gastrointestinal tract. This is N-acetylglucosamine-6-O-sulfatase from Bacteroides thetaiotaomicron (strain ATCC 29148 / DSM 2079 / JCM 5827 / CCUG 10774 / NCTC 10582 / VPI-5482 / E50).